The following is a 367-amino-acid chain: MARKYFQREVLPVTALVIMECANVGLNTLFKAATLKGMSFHVFIVYSYGLAALLLLPSLFCSFRSRTLPPMNFSILYKIVLLGIIGCCSNIMGYTGINYSSPTLASAISNLTPAFTFLLAVVFRMESVSFKRTSSVAKMLGTVVSIGGAFIVTLYNGPVVIAKSPPSVSLRSQSTNPNWILGAGFLAVEYFCVPLWYIVQTQIMREYPAEFTVVCFYSIGVSFWTALVTLFTEGNDLGAWKIKPNIALVSIVCSGLFGSCINNTIHTWALRIKGPLFVAMFKPLSIAIAVAMGVIFLRDSLYIGSLIGATVITIGFYTVMWGKAKEVALVEDDNKANHEEANEADLDSPSGSQKAPLLESYKNDEHV.

10 helical membrane-spanning segments follow: residues 10 to 30 (VLPVTALVIMECANVGLNTLF), 40 to 60 (FHVFIVYSYGLAALLLLPSLF), 73 to 93 (FSILYKIVLLGIIGCCSNIMG), 103 to 123 (TLASAISNLTPAFTFLLAVVF), 142 to 162 (TVVSIGGAFIVTLYNGPVVIA), 179 to 199 (WILGAGFLAVEYFCVPLWYIV), 211 to 231 (FTVVCFYSIGVSFWTALVTLF), 246 to 266 (IALVSIVCSGLFGSCINNTIH), 276 to 296 (LFVAMFKPLSIAIAVAMGVIF), and 301 to 321 (LYIGSLIGATVITIGFYTVMW). EamA domains follow at residues 25–153 (GLNT…FIVT) and 195–319 (LWYI…FYTV). Residues 338-367 (HEEANEADLDSPSGSQKAPLLESYKNDEHV) are disordered.

The protein belongs to the drug/metabolite transporter (DMT) superfamily. Plant drug/metabolite exporter (P-DME) (TC 2.A.7.4) family.

Its subcellular location is the membrane. The protein is WAT1-related protein At3g28050 of Arabidopsis thaliana (Mouse-ear cress).